We begin with the raw amino-acid sequence, 479 residues long: Cyclic AMP-responsive element-binding protein 3-like protein 3 (479 aa).

At 1–317 (MDGDIAAGKM…QSTSKPAHAG (317 aa)) the chain is on the cytoplasmic side. The segment at 67 to 144 (CILGPGDSDP…CPEPPRTQVQ (78 aa)) is disordered. Residues 98-110 (PQDTPPRSGTEPA) are compositionally biased toward polar residues. One can recognise a bZIP domain in the interval 239–302 (VLKKIRRKIR…LSLLEQLKHL (64 aa)). Residues 241-270 (KKIRRKIRNKQSAQESRKKKKEYIDGLENR) are basic motif. The tract at residues 281–302 (LQRKVLHLEKQNLSLLEQLKHL) is leucine-zipper. Lysine 290 participates in a covalent cross-link: Glycyl lysine isopeptide (Lys-Gly) (interchain with G-Cter in ubiquitin). The helical; Signal-anchor for type II membrane protein transmembrane segment at 318–338 (TCIAVLLLSFALIILPSISPF) threads the bilayer. Topologically, residues 339 to 479 (NSNKVDSPGD…RLVQDALGVL (141 aa)) are lumenal. Asparagine 411, asparagine 418, and asparagine 425 each carry an N-linked (GlcNAc...) asparagine glycan.

This sequence belongs to the bZIP family. ATF subfamily. As to quaternary structure, binds DNA as a dimer. May form homodimers. Interacts with ATF6. Interacts with SYNV1/HRD1; this interaction leads to CREB3L3 ubiquitination and proteasomal degradation. Post-translationally, following ER stress a fragment containing the cytoplasmic transcription factor domain is released by proteolysis. The cleavage seems to be performed sequentially by site-1 and site-2 proteases. N-glycosylation is required for optimal proteolytic activation. In terms of processing, ubiquitinated at Lys-290 by SYNV1/HRD1 via 'Lys-27'-linked ubiquitin. In terms of tissue distribution, expressed in adult liver (at protein level) and small intestine.

It is found in the endoplasmic reticulum membrane. Its subcellular location is the nucleus. Functionally, transcription factor that may act during endoplasmic reticulum (ER) stress by activating unfolded protein response target genes. Activated in response to cAMP stimulation. Binds to the cAMP response element (CRE). Activates transcription through box-B element. Activates transcription through CRE. May function synergistically with ATF6. In acute inflammatory response, may activate expression of acute phase response (APR) genes. May be involved in growth suppression. Regulates FGF21 transcription. Plays a crucial role in the regulation of triglyceride metabolism and is required for the maintenance of normal plasma triglyceride concentrations. This chain is Cyclic AMP-responsive element-binding protein 3-like protein 3 (Creb3l3), found in Mus musculus (Mouse).